Consider the following 1178-residue polypeptide: DNA-directed RNA polymerase subunit beta' (1178 aa).

4 residues coordinate Zn(2+): C60, C62, C75, and C78. Mg(2+) contacts are provided by D450, D452, and D454. Residues C795, C869, C876, and C879 each contribute to the Zn(2+) site.

Belongs to the RNA polymerase beta' chain family. The RNAP catalytic core consists of 2 alpha, 1 beta, 1 beta' and 1 omega subunit. When a sigma factor is associated with the core the holoenzyme is formed, which can initiate transcription. Mg(2+) is required as a cofactor. Requires Zn(2+) as cofactor.

The enzyme catalyses RNA(n) + a ribonucleoside 5'-triphosphate = RNA(n+1) + diphosphate. DNA-dependent RNA polymerase catalyzes the transcription of DNA into RNA using the four ribonucleoside triphosphates as substrates. In Clostridium botulinum (strain ATCC 19397 / Type A), this protein is DNA-directed RNA polymerase subunit beta'.